The sequence spans 160 residues: Large ribosomal subunit protein eL21B (160 aa).

Residues 114 to 140 (AKRKEAKAQGKTVQLRRQPAPPATAHF) are disordered.

It belongs to the eukaryotic ribosomal protein eL21 family. Component of the large ribosomal subunit (LSU). Mature yeast ribosomes consist of a small (40S) and a large (60S) subunit. The 40S small subunit contains 1 molecule of ribosomal RNA (18S rRNA) and at least 33 different proteins. The large 60S subunit contains 3 rRNA molecules (25S, 5.8S and 5S rRNA) and at least 46 different proteins.

Its subcellular location is the cytoplasm. Component of the ribosome, a large ribonucleoprotein complex responsible for the synthesis of proteins in the cell. The small ribosomal subunit (SSU) binds messenger RNAs (mRNAs) and translates the encoded message by selecting cognate aminoacyl-transfer RNA (tRNA) molecules. The large subunit (LSU) contains the ribosomal catalytic site termed the peptidyl transferase center (PTC), which catalyzes the formation of peptide bonds, thereby polymerizing the amino acids delivered by tRNAs into a polypeptide chain. The nascent polypeptides leave the ribosome through a tunnel in the LSU and interact with protein factors that function in enzymatic processing, targeting, and the membrane insertion of nascent chains at the exit of the ribosomal tunnel. The polypeptide is Large ribosomal subunit protein eL21B (rpl2102) (Schizosaccharomyces pombe (strain 972 / ATCC 24843) (Fission yeast)).